We begin with the raw amino-acid sequence, 299 residues long: Ribosomal RNA small subunit methyltransferase H (299 aa).

S-adenosyl-L-methionine-binding positions include 36 to 38 (GGH), D55, F82, D97, and Q104.

This sequence belongs to the methyltransferase superfamily. RsmH family.

It is found in the cytoplasm. It catalyses the reaction cytidine(1402) in 16S rRNA + S-adenosyl-L-methionine = N(4)-methylcytidine(1402) in 16S rRNA + S-adenosyl-L-homocysteine + H(+). Functionally, specifically methylates the N4 position of cytidine in position 1402 (C1402) of 16S rRNA. This Synechococcus sp. (strain RCC307) protein is Ribosomal RNA small subunit methyltransferase H.